The chain runs to 434 residues: Serine hydroxymethyltransferase (434 aa).

Residues leucine 132 and 136–138 (GHL) contribute to the (6S)-5,6,7,8-tetrahydrofolate site. The residue at position 241 (lysine 241) is an N6-(pyridoxal phosphate)lysine.

It belongs to the SHMT family. In terms of assembly, homodimer. The cofactor is pyridoxal 5'-phosphate.

It localises to the cytoplasm. The catalysed reaction is (6R)-5,10-methylene-5,6,7,8-tetrahydrofolate + glycine + H2O = (6S)-5,6,7,8-tetrahydrofolate + L-serine. It participates in one-carbon metabolism; tetrahydrofolate interconversion. Its pathway is amino-acid biosynthesis; glycine biosynthesis; glycine from L-serine: step 1/1. Functionally, catalyzes the reversible interconversion of serine and glycine with tetrahydrofolate (THF) serving as the one-carbon carrier. This reaction serves as the major source of one-carbon groups required for the biosynthesis of purines, thymidylate, methionine, and other important biomolecules. Also exhibits THF-independent aldolase activity toward beta-hydroxyamino acids, producing glycine and aldehydes, via a retro-aldol mechanism. This is Serine hydroxymethyltransferase from Kineococcus radiotolerans (strain ATCC BAA-149 / DSM 14245 / SRS30216).